We begin with the raw amino-acid sequence, 142 residues long: Large ribosomal subunit protein uL16 (142 aa).

This sequence belongs to the universal ribosomal protein uL16 family. Part of the 50S ribosomal subunit.

Its function is as follows. Binds 23S rRNA and is also seen to make contacts with the A and possibly P site tRNAs. This Thermotoga sp. (strain RQ2) protein is Large ribosomal subunit protein uL16.